The primary structure comprises 122 residues: MARIAGVNIPTAKRVVIALTYIHGIGTKFAQEIVEKVGIPAERRVHQLTDAEVLQIRETIDRDYQVEGDLRRETSMNIKRLMDLGCYRGLRHRRGLPVRGQRTHTNARTRKGPAKAIAGKKK.

Residues 99–122 are disordered; the sequence is RGQRTHTNARTRKGPAKAIAGKKK.

The protein belongs to the universal ribosomal protein uS13 family. As to quaternary structure, part of the 30S ribosomal subunit. Forms a loose heterodimer with protein S19. Forms two bridges to the 50S subunit in the 70S ribosome.

Located at the top of the head of the 30S subunit, it contacts several helices of the 16S rRNA. In the 70S ribosome it contacts the 23S rRNA (bridge B1a) and protein L5 of the 50S subunit (bridge B1b), connecting the 2 subunits; these bridges are implicated in subunit movement. Contacts the tRNAs in the A and P-sites. This Sinorhizobium medicae (strain WSM419) (Ensifer medicae) protein is Small ribosomal subunit protein uS13.